We begin with the raw amino-acid sequence, 157 residues long: Crossover junction endodeoxyribonuclease RuvC (157 aa).

Active-site residues include D7, E67, and D139. D7, E67, and D139 together coordinate Mg(2+).

The protein belongs to the RuvC family. In terms of assembly, homodimer which binds Holliday junction (HJ) DNA. The HJ becomes 2-fold symmetrical on binding to RuvC with unstacked arms; it has a different conformation from HJ DNA in complex with RuvA. In the full resolvosome a probable DNA-RuvA(4)-RuvB(12)-RuvC(2) complex forms which resolves the HJ. Mg(2+) is required as a cofactor.

Its subcellular location is the cytoplasm. The enzyme catalyses Endonucleolytic cleavage at a junction such as a reciprocal single-stranded crossover between two homologous DNA duplexes (Holliday junction).. In terms of biological role, the RuvA-RuvB-RuvC complex processes Holliday junction (HJ) DNA during genetic recombination and DNA repair. Endonuclease that resolves HJ intermediates. Cleaves cruciform DNA by making single-stranded nicks across the HJ at symmetrical positions within the homologous arms, yielding a 5'-phosphate and a 3'-hydroxyl group; requires a central core of homology in the junction. The consensus cleavage sequence is 5'-(A/T)TT(C/G)-3'. Cleavage occurs on the 3'-side of the TT dinucleotide at the point of strand exchange. HJ branch migration catalyzed by RuvA-RuvB allows RuvC to scan DNA until it finds its consensus sequence, where it cleaves and resolves the cruciform DNA. This chain is Crossover junction endodeoxyribonuclease RuvC, found in Prochlorococcus marinus (strain AS9601).